The following is a 266-amino-acid chain: 2-hydroxyisocaproyl-CoA dehydratase activator (266 aa).

ATP-binding positions include 10-14 (STASK) and 102-104 (GQD). Residue cysteine 125 coordinates [4Fe-4S] cluster. Aspartate 134 provides a ligand contact to ATP. Cysteine 164 contacts [4Fe-4S] cluster. 2 residues coordinate ATP: glycine 215 and glutamine 241.

This sequence belongs to the HadI activator family. As to quaternary structure, homodimer. [4Fe-4S] cluster is required as a cofactor.

Its function is as follows. Involved in the reductive branch of L-leucine fermentation. Required for the activation of (R)-2-hydroxyisocaproyl-CoA dehydratase. The reduced activator transfers one electron to the dehydratase concomitant with hydrolysis of ATP. This protein is extremely sensitive towards oxygen. This chain is 2-hydroxyisocaproyl-CoA dehydratase activator, found in Clostridioides difficile (Peptoclostridium difficile).